The primary structure comprises 352 residues: Phosphatidylglycerol--prolipoprotein diacylglyceryl transferase (352 aa).

Helical transmembrane passes span 20–40 (WYGLSYMMGFICAYILITWLA), 55–75 (FITYAAIGTLVGGRLGYVLFY), 97–117 (EGGMASHGGIIGIVIACLLYA), and 122–142 (VNSLYLLDLVAVTGPIGVFFG). Arginine 143 serves as a coordination point for a 1,2-diacyl-sn-glycero-3-phospho-(1'-sn-glycerol). 3 helical membrane passes run 248-268 (SQLFAAFGEGLLIFMFLFFLW), 275-295 (GFIAACFVLIYAVVRVVDEHF), and 314-334 (WLSLAMFVVGLILMVVWTRAA).

The protein belongs to the Lgt family.

The protein localises to the cell inner membrane. It catalyses the reaction L-cysteinyl-[prolipoprotein] + a 1,2-diacyl-sn-glycero-3-phospho-(1'-sn-glycerol) = an S-1,2-diacyl-sn-glyceryl-L-cysteinyl-[prolipoprotein] + sn-glycerol 1-phosphate + H(+). It participates in protein modification; lipoprotein biosynthesis (diacylglyceryl transfer). In terms of biological role, catalyzes the transfer of the diacylglyceryl group from phosphatidylglycerol to the sulfhydryl group of the N-terminal cysteine of a prolipoprotein, the first step in the formation of mature lipoproteins. The sequence is that of Phosphatidylglycerol--prolipoprotein diacylglyceryl transferase from Bdellovibrio bacteriovorus (strain ATCC 15356 / DSM 50701 / NCIMB 9529 / HD100).